Reading from the N-terminus, the 383-residue chain is BRISC and BRCA1-A complex member 2 (383 aa).

The residue at position 1 (Met1) is an N-acetylmethionine. Ser2 carries the phosphoserine modification. UEV-like stretches follow at residues 30 to 147 and 275 to 364; these read DATN…TLLE and IAAF…RAKA.

It belongs to the BABAM2 family. Component of the ARISC complex, at least composed of UIMC1/RAP80, ABRAXAS1, BRCC3/BRCC36, BABAM2 and BABAM1/NBA1. Component of the BRCA1-A complex, at least composed of BRCA1, BARD1, UIMC1/RAP80, ABRAXAS1, BRCC3/BRCC36, BABAM2 and BABAM1/NBA1. In the BRCA1-A complex, interacts directly with ABRAXAS1, BRCC3/BRCC36 and BABAM1/NBA1. Binds polyubiquitin. Component of the BRISC complex, at least composed of ABRAXAS2, BRCC3/BRCC36, BABAM2 and BABAM1/NBA1. Identified in a complex with SHMT2 and the other subunits of the BRISC complex. Component of the BRCA1/BRCA2 containing complex (BRCC), which also contains BRCA1, BRCA2, BARD1, BRCC3/BRCC36 and RAD51. BRCC is a ubiquitin E3 ligase complex that enhances cellular survival following DNA damage. May interact with FAS and TNFRSF1A. Expressed in brain, heart, kidney, liver, lung, testis, germinal center B-cells and various mouse cell lines.

Its subcellular location is the cytoplasm. It localises to the nucleus. Functionally, component of the BRCA1-A complex, a complex that specifically recognizes 'Lys-63'-linked ubiquitinated histones H2A and H2AX at DNA lesions sites, leading to target the BRCA1-BARD1 heterodimer to sites of DNA damage at double-strand breaks (DSBs). The BRCA1-A complex also possesses deubiquitinase activity that specifically removes 'Lys-63'-linked ubiquitin on histones H2A and H2AX. In the BRCA1-A complex, it acts as an adapter that bridges the interaction between BABAM1/NBA1 and the rest of the complex, thereby being required for the complex integrity and modulating the E3 ubiquitin ligase activity of the BRCA1-BARD1 heterodimer. Probably also plays a role as a component of the BRISC complex, a multiprotein complex that specifically cleaves 'Lys-63'-linked ubiquitin. May regulate TNF-alpha signaling through its interactions with TNFRSF1A. In terms of biological role, component of the BRCA1-A complex, a complex that specifically recognizes 'Lys-63'-linked ubiquitinated histones H2A and H2AX at DNA lesions sites, leading to target the BRCA1-BARD1 heterodimer to sites of DNA damage at double-strand breaks (DSBs). The BRCA1-A complex also possesses deubiquitinase activity that specifically removes 'Lys-63'-linked ubiquitin on histones H2A and H2AX. In the BRCA1-A complex, it acts as an adapter that bridges the interaction between BABAM1/NBA1 and the rest of the complex, thereby being required for the complex integrity and modulating the E3 ubiquitin ligase activity of the BRCA1-BARD1 heterodimer. Component of the BRISC complex, a multiprotein complex that specifically cleaves 'Lys-63'-linked ubiquitin in various substrates. Within the BRISC complex, acts as an adapter that bridges the interaction between BABAM1/NBA1 and the rest of the complex, thereby being required for the complex integrity. The BRISC complex is required for normal mitotic spindle assembly and microtubule attachment to kinetochores via its role in deubiquitinating NUMA1. The BRISC complex plays a role in interferon signaling via its role in the deubiquitination of the interferon receptor IFNAR1; deubiquitination increases IFNAR1 activity by enhancing its stability and cell surface expression. Down-regulates the response to bacterial lipopolysaccharide (LPS) via its role in IFNAR1 deubiquitination. May play a role in homeostasis or cellular differentiation in cells of neural, epithelial and germline origins. May also act as a death receptor-associated anti-apoptotic protein, which inhibits the mitochondrial apoptotic pathway. May regulate TNF-alpha signaling through its interactions with TNFRSF1A; however these effects may be indirect. This Mus musculus (Mouse) protein is BRISC and BRCA1-A complex member 2 (Babam2).